The sequence spans 241 residues: Small ribosomal subunit protein uS2 (241 aa).

It belongs to the universal ribosomal protein uS2 family.

The protein is Small ribosomal subunit protein uS2 of Photorhabdus laumondii subsp. laumondii (strain DSM 15139 / CIP 105565 / TT01) (Photorhabdus luminescens subsp. laumondii).